A 636-amino-acid chain; its full sequence is Topoisomerase I damage affected protein 7 (636 aa).

The span at 1–18 (MNSNSTIGRTTLGESDTI) shows a compositional bias: polar residues. Disordered regions lie at residues 1-33 (MNSNSTIGRTTLGESDTISLSFSEPSSSLNSRS), 87-109 (TLVSSTDSSSSSEQDTYSSQYDP), 238-271 (ISSPSTTSNKDTTFPSSSRNTSTSFYSSSLSSTN), 299-326 (PTSSSVSSSSSKVPSNRPSSSSSSDDTT), and 339-362 (QSTTSSSIPPTTQTPSTSTISTSP). The N-linked (GlcNAc...) asparagine glycan is linked to Asn4. 2 stretches are compositionally biased toward low complexity: residues 19 to 33 (SLSFSEPSSSLNSRS) and 87 to 108 (TLVSSTDSSSSSEQDTYSSQYD). N-linked (GlcNAc...) asparagine glycosylation occurs at Asn257. A helical transmembrane segment spans residues 457-477 (IVGSVVGSVGGILICVLVVWF). N-linked (GlcNAc...) asparagine glycosylation is present at Asn492. Polar residues predominate over residues 510–541 (QAKEASLQAQDSGSQQRNTETASANNPFSNEF). Residues 510 to 551 (QAKEASLQAQDSGSQQRNTETASANNPFSNEFNFKARGNPPP) are disordered. A Glycyl lysine isopeptide (Lys-Gly) (interchain with G-Cter in ubiquitin) cross-link involves residue Lys512. N-linked (GlcNAc...) asparagine glycans are attached at residues Asn557, Asn562, and Asn626. A Phosphoserine modification is found at Ser628.

It belongs to the TDA7 family.

It is found in the vacuole membrane. In Saccharomyces cerevisiae (strain YJM789) (Baker's yeast), this protein is Topoisomerase I damage affected protein 7 (TDA7).